A 247-amino-acid polypeptide reads, in one-letter code: UPF0309 protein Teth39_1980 (247 aa).

The SIS domain maps to isoleucine 31–lysine 213.

Belongs to the UPF0309 family.

This chain is UPF0309 protein Teth39_1980, found in Thermoanaerobacter pseudethanolicus (strain ATCC 33223 / 39E) (Clostridium thermohydrosulfuricum).